A 168-amino-acid chain; its full sequence is MSSATVSRTSRSKATGASSSSISSSIRASPSSSSSGGGGGGGTRRRRRRTGRRSTKRSIISPRRRRMVSVTARPFSRGRSWKTPPVMSRLWVGGGLPCGRDTALTMHLNNCCVGTPPPRDLSESASTGSENLSRKASNQSQSQGRLSTVAGGSGWRSGLFLAEVLLMM.

Disordered stretches follow at residues 1–81 (MSSA…GRSW) and 119–150 (RDLS…STVA). Low complexity predominate over residues 7–34 (SRTSRSKATGASSSSISSSIRASPSSSS). Residues 43–67 (TRRRRRRTGRRSTKRSIISPRRRRM) are compositionally biased toward basic residues. The span at 123–146 (ESASTGSENLSRKASNQSQSQGRL) shows a compositional bias: polar residues.

This is an uncharacterized protein from Human adenovirus C serotype 2 (HAdV-2).